Reading from the N-terminus, the 79-residue chain is Aquaporin Z (79 aa).

A run of 2 helical transmembrane segments spans residues 4–24 (LFAE…SAVF) and 33–53 (IGFA…AYAV). The NPA 1 motif lies at 62–64 (NPA).

This sequence belongs to the MIP/aquaporin (TC 1.A.8) family. As to quaternary structure, homotetramer.

The protein localises to the cell membrane. It catalyses the reaction H2O(in) = H2O(out). Functionally, channel that permits osmotically driven movement of water in both directions. It is involved in the osmoregulation and in the maintenance of cell turgor during volume expansion in rapidly growing cells. It mediates rapid entry or exit of water in response to abrupt changes in osmolarity. In Flavobacterium johnsoniae (Cytophaga johnsonae), this protein is Aquaporin Z.